Here is a 138-residue protein sequence, read N- to C-terminus: Cysteine desulfuration protein SufE (138 aa).

Cys-51 serves as the catalytic Cysteine persulfide intermediate.

It belongs to the SufE family. Homodimer. Interacts with SufS.

It localises to the cytoplasm. The protein operates within cofactor biosynthesis; iron-sulfur cluster biosynthesis. Participates in cysteine desulfuration mediated by SufS. Cysteine desulfuration mobilizes sulfur from L-cysteine to yield L-alanine and constitutes an essential step in sulfur metabolism for biosynthesis of a variety of sulfur-containing biomolecules. Functions as a sulfur acceptor for SufS, by mediating the direct transfer of the sulfur atom from the S-sulfanylcysteine of SufS, an intermediate product of cysteine desulfuration process. The chain is Cysteine desulfuration protein SufE from Shigella sonnei (strain Ss046).